The sequence spans 172 residues: NADH-ubiquinone oxidoreductase chain 6 (172 aa).

5 consecutive transmembrane segments (helical) span residues 1–21 (MTYF…AVAS), 27–47 (YGVV…LSLG), 48–68 (VSFV…VVFV), 87–107 (VVGY…VGGF), and 138–158 (CGVG…FVVL).

This sequence belongs to the complex I subunit 6 family.

It is found in the mitochondrion membrane. The enzyme catalyses a ubiquinone + NADH + 5 H(+)(in) = a ubiquinol + NAD(+) + 4 H(+)(out). Functionally, core subunit of the mitochondrial membrane respiratory chain NADH dehydrogenase (Complex I) that is believed to belong to the minimal assembly required for catalysis. Complex I functions in the transfer of electrons from NADH to the respiratory chain. The immediate electron acceptor for the enzyme is believed to be ubiquinone. The protein is NADH-ubiquinone oxidoreductase chain 6 (MT-ND6) of Uria lomvia (Thick-billed murre).